Here is a 447-residue protein sequence, read N- to C-terminus: N-succinylarginine dihydrolase (447 aa).

Substrate-binding positions include 19-28, asparagine 110, and 137-138; these read AGLSFGNEAS and HR. Residue glutamate 174 is part of the active site. Arginine 212 lines the substrate pocket. Histidine 248 is an active-site residue. Substrate contacts are provided by aspartate 250 and asparagine 359. Cysteine 365 (nucleophile) is an active-site residue.

This sequence belongs to the succinylarginine dihydrolase family. Homodimer.

It catalyses the reaction N(2)-succinyl-L-arginine + 2 H2O + 2 H(+) = N(2)-succinyl-L-ornithine + 2 NH4(+) + CO2. Its pathway is amino-acid degradation; L-arginine degradation via AST pathway; L-glutamate and succinate from L-arginine: step 2/5. In terms of biological role, catalyzes the hydrolysis of N(2)-succinylarginine into N(2)-succinylornithine, ammonia and CO(2). The polypeptide is N-succinylarginine dihydrolase (Escherichia coli O17:K52:H18 (strain UMN026 / ExPEC)).